The chain runs to 385 residues: MSKRDFYEVLGVSRDASERDIKKAYKRLAMKYHPDRNQGDESAADKFKEVKESYEILTDPQKKAAYDQYGHAAFEQGGGGFGGGGFGGGGADFGDIFGDVFGDIFGGGRRGGGQQRAQRGADLRYNMELSLEEAVRGVSKEIEVPTLVHCDTCDGSGAKKGSSAETCGTCHGHGQVQMRQGFFAVQQTCPTCHGKGKIIRPCNECHGQGRKQKTKTLNVKIPAGVDTGDRIRLSGEGERGEMGAPAGDLYVQVHVKEHHIFEREGNNLYCEVPVSFLMACSMAALGGEVEVPTLDGRVNLKVPTETRAGRMFRMRGKGVKGVRGGGVGDLIVKLVVETPVNLSARQKELLKEFDESCGGDAQLSTNQNLKGFFNGVKKFFDDLTS.

The J domain maps to 5–70 (DFYEVLGVSR…QKKAAYDQYG (66 aa)). A CR-type zinc finger spans residues 137–214 (GVSKEIEVPT…CHGQGRKQKT (78 aa)). Zn(2+)-binding residues include cysteine 150, cysteine 153, cysteine 167, cysteine 170, cysteine 189, cysteine 192, cysteine 202, and cysteine 205. 4 CXXCXGXG motif repeats span residues 150–157 (CDTCDGSG), 167–174 (CGTCHGHG), 189–196 (CPTCHGKG), and 202–209 (CNECHGQG).

It belongs to the DnaJ family. As to quaternary structure, homodimer. It depends on Zn(2+) as a cofactor.

It localises to the cytoplasm. Functionally, participates actively in the response to hyperosmotic and heat shock by preventing the aggregation of stress-denatured proteins and by disaggregating proteins, also in an autonomous, DnaK-independent fashion. Unfolded proteins bind initially to DnaJ; upon interaction with the DnaJ-bound protein, DnaK hydrolyzes its bound ATP, resulting in the formation of a stable complex. GrpE releases ADP from DnaK; ATP binding to DnaK triggers the release of the substrate protein, thus completing the reaction cycle. Several rounds of ATP-dependent interactions between DnaJ, DnaK and GrpE are required for fully efficient folding. Also involved, together with DnaK and GrpE, in the DNA replication of plasmids through activation of initiation proteins. In Vibrio harveyi (Beneckea harveyi), this protein is Chaperone protein DnaJ.